Reading from the N-terminus, the 738-residue chain is Prolyl oligopeptidase A (738 aa).

Active-site charge relay system residues include serine 581, aspartate 665, and histidine 701.

Belongs to the peptidase S9A family. As to quaternary structure, monomer.

It carries out the reaction Hydrolysis of Pro-|-Xaa &gt;&gt; Ala-|-Xaa in oligopeptides.. Functionally, housekeeping prolyl oligopeptidase (POP) that behaves like a conventional POP by cleaving peptide bonds on the C-terminal side of prolyl residues within peptides that are up to approximately 30 amino acids long. This Galerina marginata (strain CBS 339.88) protein is Prolyl oligopeptidase A.